The chain runs to 481 residues: Glutamyl-tRNA(Gln) amidotransferase subunit A (481 aa).

Residues lysine 74 and serine 149 each act as charge relay system in the active site. Serine 173 serves as the catalytic Acyl-ester intermediate.

It belongs to the amidase family. GatA subfamily. As to quaternary structure, heterotrimer of A, B and C subunits.

It carries out the reaction L-glutamyl-tRNA(Gln) + L-glutamine + ATP + H2O = L-glutaminyl-tRNA(Gln) + L-glutamate + ADP + phosphate + H(+). In terms of biological role, allows the formation of correctly charged Gln-tRNA(Gln) through the transamidation of misacylated Glu-tRNA(Gln) in organisms which lack glutaminyl-tRNA synthetase. The reaction takes place in the presence of glutamine and ATP through an activated gamma-phospho-Glu-tRNA(Gln). The protein is Glutamyl-tRNA(Gln) amidotransferase subunit A of Francisella tularensis subsp. mediasiatica (strain FSC147).